The primary structure comprises 407 residues: MTLVKSILLALAAGHVAQAQLNTAAKAAGLLYFGTAVDNPDLSDSKYLVNLETADFGQITPANAMKWQPTEPSQGSYTFTQGDQIASLAKSNNDYLRCHNLVWYNQLPSYITSGSWTNATLIAALKEHINGVVTHYKGQCYAWDVVNEALNEDGTYRQNVFYQHIGEAYIPIAFAAAAAADPNAKLYYNDYNIEYAGAKATGAQGIVKLIQAAGGRIDGVGLQSHFIVGQTPSLATQKANMAAFTALGVDVAITELDIRMTLPDTSALQTQQSTDYQTTTTACVQTKGCVGITLWDYTDKYSWVPGTFSGQGDACPWDSNYNKKPAYYGILAGLQSGSGSSSSTSSTTLITTTTPTASSSTTSATTTSATSGAAHWGQCGGIGWSGPTICVSPYTCQVLNPYYSQCL.

The N-terminal stretch at 1 to 19 (MTLVKSILLALAAGHVAQA) is a signal peptide. In terms of domain architecture, GH10 spans 20–333 (QLNTAAKAAG…KPAYYGILAG (314 aa)). A glycan (N-linked (GlcNAc...) asparagine) is linked at Asn118. The active-site Proton donor is Glu148. Glu255 serves as the catalytic Nucleophile. Cys283 and Cys289 form a disulfide bridge. The interval 337–364 (GSGSSSSTSSTTLITTTTPTASSSTTSA) is disordered. One can recognise a CBM1 domain in the interval 371–407 (SGAAHWGQCGGIGWSGPTICVSPYTCQVLNPYYSQCL).

This sequence belongs to the glycosyl hydrolase 10 (cellulase F) family.

It is found in the secreted. It catalyses the reaction Endohydrolysis of (1-&gt;4)-beta-D-xylosidic linkages in xylans.. It functions in the pathway glycan degradation; xylan degradation. Inhibited by wheat xylanase inhibiting protein I (XIP-I). Functionally, endo-1,4-beta-xylanase involved in the hydrolysis of xylan, a major structural heterogeneous polysaccharide found in plant biomass representing the second most abundant polysaccharide in the biosphere, after cellulose. Shows an endo-mode of action on xylan forming mainly xylobiose and short-chain xylooligosaccharides (XOS). The protein is Endo-1,4-beta-xylanase D (xynD) of Talaromyces funiculosus (Fruitlet core rot fungus).